The primary structure comprises 491 residues: Cysteine--tRNA ligase (491 aa).

Cys31 serves as a coordination point for Zn(2+). Positions 33-43 match the 'HIGH' region motif; that stretch reads PTVYGDAHLGH. Cys226, His251, and Glu255 together coordinate Zn(2+). A 'KMSKS' region motif is present at residues 283 to 287; the sequence is KMGKS. Lys286 provides a ligand contact to ATP.

The protein belongs to the class-I aminoacyl-tRNA synthetase family. Monomer. Zn(2+) serves as cofactor.

The protein localises to the cytoplasm. The catalysed reaction is tRNA(Cys) + L-cysteine + ATP = L-cysteinyl-tRNA(Cys) + AMP + diphosphate. The sequence is that of Cysteine--tRNA ligase from Bacteroides fragilis (strain ATCC 25285 / DSM 2151 / CCUG 4856 / JCM 11019 / LMG 10263 / NCTC 9343 / Onslow / VPI 2553 / EN-2).